We begin with the raw amino-acid sequence, 260 residues long: HTH-type transcriptional repressor NanR (260 aa).

The HTH gntR-type domain maps to 27 to 95 (KKLSDMVEEE…NGERARVSMP (69 aa)). The H-T-H motif DNA-binding region spans 55-74 (ERELMEFFNVGRPSVREALA).

It belongs to the NanR family.

Functionally, transcriptional repressor that controls expression of the genes required for the catabolism of sialic acids. The polypeptide is HTH-type transcriptional repressor NanR (Enterobacter sp. (strain 638)).